The chain runs to 230 residues: Large ribosomal subunit protein uL4 (230 aa).

A disordered region spans residues 59–113; that stretch reads RQGTHATKTRGEVSGGGKKPYRQKGTGRARQGSTRAPQFTGGGTVHGPQPRDYSQ.

The protein belongs to the universal ribosomal protein uL4 family. In terms of assembly, part of the 50S ribosomal subunit.

One of the primary rRNA binding proteins, this protein initially binds near the 5'-end of the 23S rRNA. It is important during the early stages of 50S assembly. It makes multiple contacts with different domains of the 23S rRNA in the assembled 50S subunit and ribosome. Functionally, forms part of the polypeptide exit tunnel. This is Large ribosomal subunit protein uL4 from Nocardia farcinica (strain IFM 10152).